The following is a 911-amino-acid chain: Alpha-actinin-4 (911 aa).

The actin-binding stretch occupies residues 1–269 (MVDYHAANQA…YVSSFYHAFS (269 aa)). The interaction with VCL stretch occupies residues 12–26 (QYGPSSGGNGTGGGG). Positions 12 to 31 (QYGPSSGGNGTGGGGGMGDY) are disordered. The segment covering 16 to 29 (SSGGNGTGGGGGMG) has biased composition (gly residues). Residue Tyr-31 is modified to Phosphotyrosine. The interaction with VCL stretch occupies residues 40-61 (RDLLLDPAWEKQQRKTFTAWCN). 2 Calponin-homology (CH) domains span residues 50 to 154 (KQQR…LRFA) and 163 to 269 (TSAK…HAFS). The LXXLL motif signature appears at 84-88 (LMLLL). The segment at 108–126 (KINNVNKALDFIASKGVKL) is interaction with VCL. Residue Lys-114 is modified to N6-acetyllysine. Positions 177-192 (TAPYKNVNVQNFHISW) are polyphosphoinositide (PIP2)-binding. The residue at position 214 (Lys-214) is an N6-acetyllysine. Thr-249 is subject to Phosphothreonine. Spectrin repeat units follow at residues 293-403 (HLME…WLLN), 413-518 (HLAE…ALEK), 528-639 (QLHL…ALLE), and 649-752 (HLRR…EVEN). N6-acetyllysine occurs at positions 592 and 625. Position 696 is a phosphoserine (Ser-696). The interval 736–911 (WEQLLTTIAR…STALYGESDL (176 aa)) is mediates interaction with MICALL2. 2 EF-hand domains span residues 765–800 (EQMQEFRASFNHFDKDHGGALGPEEFKACLISLGYD) and 806–841 (QGDAEFNRIMSVVDPNHSGLVTFQAFIDFMSRETTD). Asp-778 is a binding site for Ca(2+). Lys-779 carries the post-translational modification N6-acetyllysine. The Ca(2+) site is built by Asp-780 and Glu-789. Lys-859 is subject to N6-acetyllysine. The residue at position 909 (Ser-909) is a Phosphoserine.

This sequence belongs to the alpha-actinin family. Homodimer; antiparallel. Interacts with MAGI1. Interacts with MICALL2 (preferentially in opened conformation); stimulated by RAB13 activation. Identified in a IGF2BP1-dependent mRNP granule complex containing untranslated mRNAs. Component of the CART complex, at least composed of ACTN4, HGS/HRS, MYO5B and TRIM3. Binds TRIM3 at the N-terminus. Interacts with PDLIM2. Identified in a complex with CASK, IQGAP1, MAGI2, NPHS1, SPTAN1 and SPTBN1. Interacts with PPARG and RARA. Binds to VCL; this interaction triggers VCL conformational changes. Interacts with SEPTIN14. Interacts with IGSF8. As to expression, expressed in the foot process layer of podocytes in the kidney glomerulus but not in tubules (at protein level).

It localises to the nucleus. Its subcellular location is the cytoplasm. The protein resides in the cell junction. The protein localises to the cytoskeleton. It is found in the stress fiber. It localises to the perinuclear region. In terms of biological role, F-actin cross-linking protein which is thought to anchor actin to a variety of intracellular structures. This is a bundling protein. Probably involved in vesicular trafficking via its association with the CART complex. The CART complex is necessary for efficient transferrin receptor recycling but not for EGFR degradation. Involved in tight junction assembly in epithelial cells probably through interaction with MICALL2. Links MICALL2 to the actin cytoskeleton and recruits it to the tight junctions. May also function as a transcriptional coactivator, stimulating transcription mediated by the nuclear hormone receptors PPARG and RARA. Association with IGSF8 regulates the immune synapse formation and is required for efficient T-cell activation. This is Alpha-actinin-4 from Rattus norvegicus (Rat).